Reading from the N-terminus, the 159-residue chain is RNA pyrophosphohydrolase (159 aa).

Positions 6 to 149 (GFRPNVGIIL…KREVYRRALK (144 aa)) constitute a Nudix hydrolase domain. Residues 38-59 (GGINPQETPEDALYRELNEEVG) carry the Nudix box motif.

Belongs to the Nudix hydrolase family. RppH subfamily. Requires a divalent metal cation as cofactor.

Functionally, accelerates the degradation of transcripts by removing pyrophosphate from the 5'-end of triphosphorylated RNA, leading to a more labile monophosphorylated state that can stimulate subsequent ribonuclease cleavage. The sequence is that of RNA pyrophosphohydrolase from Pseudomonas savastanoi pv. phaseolicola (strain 1448A / Race 6) (Pseudomonas syringae pv. phaseolicola (strain 1448A / Race 6)).